Reading from the N-terminus, the 165-residue chain is Interferon gamma (165 aa).

The N-terminal stretch at 1 to 23 (MKYTSYILAFQLCIVLGSLGCYC) is a signal peptide. A Pyrrolidone carboxylic acid modification is found at glutamine 24. Residues asparagine 48 and asparagine 120 are each glycosylated (N-linked (GlcNAc...) asparagine).

It belongs to the type II (or gamma) interferon family. In terms of assembly, homodimer. Interacts with IFNGR1 (via extracellular domain); this interaction promotes IFNGR1 dimerization. Released primarily from activated T lymphocytes.

The protein localises to the secreted. Its function is as follows. Type II interferon produced by immune cells such as T-cells and NK cells that plays crucial roles in antimicrobial, antiviral, and antitumor responses by activating effector immune cells and enhancing antigen presentation. Primarily signals through the JAK-STAT pathway after interaction with its receptor IFNGR1 to affect gene regulation. Upon IFNG binding, IFNGR1 intracellular domain opens out to allow association of downstream signaling components JAK2, JAK1 and STAT1, leading to STAT1 activation, nuclear translocation and transcription of IFNG-regulated genes. Many of the induced genes are transcription factors such as IRF1 that are able to further drive regulation of a next wave of transcription. Plays a role in class I antigen presentation pathway by inducing a replacement of catalytic proteasome subunits with immunoproteasome subunits. In turn, increases the quantity, quality, and repertoire of peptides for class I MHC loading. Increases the efficiency of peptide generation also by inducing the expression of activator PA28 that associates with the proteasome and alters its proteolytic cleavage preference. Up-regulates as well MHC II complexes on the cell surface by promoting expression of several key molecules such as cathepsins B/CTSB, H/CTSH, and L/CTSL. Participates in the regulation of hematopoietic stem cells during development and under homeostatic conditions by affecting their development, quiescence, and differentiation. This chain is Interferon gamma (IFNG), found in Cercocebus atys (Sooty mangabey).